A 273-amino-acid polypeptide reads, in one-letter code: Bifunctional protein FolD (273 aa).

NADP(+) contacts are provided by residues 152–154 (GRS), T179, and I220.

The protein belongs to the tetrahydrofolate dehydrogenase/cyclohydrolase family. In terms of assembly, homodimer.

It carries out the reaction (6R)-5,10-methylene-5,6,7,8-tetrahydrofolate + NADP(+) = (6R)-5,10-methenyltetrahydrofolate + NADPH. It catalyses the reaction (6R)-5,10-methenyltetrahydrofolate + H2O = (6R)-10-formyltetrahydrofolate + H(+). Its pathway is one-carbon metabolism; tetrahydrofolate interconversion. Functionally, catalyzes the oxidation of 5,10-methylenetetrahydrofolate to 5,10-methenyltetrahydrofolate and then the hydrolysis of 5,10-methenyltetrahydrofolate to 10-formyltetrahydrofolate. This chain is Bifunctional protein FolD, found in Petrotoga mobilis (strain DSM 10674 / SJ95).